Here is a 740-residue protein sequence, read N- to C-terminus: Ion-translocating oxidoreductase complex subunit C (740 aa).

4Fe-4S ferredoxin-type domains are found at residues Gly369–Tyr397 and Lys407–Phe436. Residues Cys377, Cys380, Cys383, Cys387, Cys416, Cys419, Cys422, and Cys426 each coordinate [4Fe-4S] cluster. The disordered stretch occupies residues Lys602–Pro714. The span at Gln605–Gln615 shows a compositional bias: low complexity.

It belongs to the 4Fe4S bacterial-type ferredoxin family. RnfC subfamily. As to quaternary structure, the complex is composed of six subunits: RsxA, RsxB, RsxC, RsxD, RsxE and RsxG. Requires [4Fe-4S] cluster as cofactor.

The protein localises to the cell inner membrane. Part of a membrane-bound complex that couples electron transfer with translocation of ions across the membrane. Required to maintain the reduced state of SoxR. The chain is Ion-translocating oxidoreductase complex subunit C from Escherichia coli O17:K52:H18 (strain UMN026 / ExPEC).